The primary structure comprises 404 residues: Cysteine desulfurase IscS (404 aa).

Residues 75–76 (AT), N155, Q183, and 203–205 (SGH) each bind pyridoxal 5'-phosphate. K206 carries the N6-(pyridoxal phosphate)lysine modification. T243 provides a ligand contact to pyridoxal 5'-phosphate. C328 functions as the Cysteine persulfide intermediate in the catalytic mechanism. Residue C328 coordinates [2Fe-2S] cluster.

The protein belongs to the class-V pyridoxal-phosphate-dependent aminotransferase family. NifS/IscS subfamily. In terms of assembly, homodimer. Forms a heterotetramer with IscU, interacts with other sulfur acceptors. Pyridoxal 5'-phosphate is required as a cofactor.

The protein resides in the cytoplasm. The catalysed reaction is (sulfur carrier)-H + L-cysteine = (sulfur carrier)-SH + L-alanine. Its pathway is cofactor biosynthesis; iron-sulfur cluster biosynthesis. Functionally, master enzyme that delivers sulfur to a number of partners involved in Fe-S cluster assembly, tRNA modification or cofactor biosynthesis. Catalyzes the removal of elemental sulfur atoms from cysteine to produce alanine. Functions as a sulfur delivery protein for Fe-S cluster synthesis onto IscU, an Fe-S scaffold assembly protein, as well as other S acceptor proteins. This is Cysteine desulfurase IscS from Pectobacterium atrosepticum (strain SCRI 1043 / ATCC BAA-672) (Erwinia carotovora subsp. atroseptica).